Reading from the N-terminus, the 185-residue chain is MIETILLDAQERMGKCVDATKNQMAKVRTGRAHPSLLDSIQVSYYGAMSPLKQVANVGIEDSRTLSVTVFDRSMVQAVEKAIMTSDLGLNPMTAGATLRIPLPALTEERRKDFIKVVRNEAENGRIAIRNVRRDAISEVKKLEKAKECTEDDVRRSEDEVQKYTDAHIKNVDEVLTAKEKELMEV.

This sequence belongs to the RRF family.

The protein resides in the cytoplasm. Functionally, responsible for the release of ribosomes from messenger RNA at the termination of protein biosynthesis. May increase the efficiency of translation by recycling ribosomes from one round of translation to another. This chain is Ribosome-recycling factor, found in Shewanella denitrificans (strain OS217 / ATCC BAA-1090 / DSM 15013).